A 793-amino-acid chain; its full sequence is Protein zer-1 homolog (793 aa).

LRR repeat units follow at residues 84–108, 187–210, and 269–294; these read RTSLKIVNLRNSTLSSIGLETLMRH, LHDLGHLDLTSCVLANFSLEALGS, and LRHLTHLDISGTNLAGNGVATKESTT.

It belongs to the zyg-11 family.

Functionally, serves as substrate adapter subunit in an E3 ubiquitin ligase complex CG12084-cul-2-elongin BC. Targets substrates bearing N-terminal glycine degrons for proteasomal degradation. The polypeptide is Protein zer-1 homolog (Drosophila melanogaster (Fruit fly)).